Consider the following 292-residue polypeptide: Ribosomal RNA small subunit methyltransferase A (292 aa).

S-adenosyl-L-methionine is bound by residues Asn-28, Leu-30, Gly-55, Glu-76, Asp-101, and Asn-126.

Belongs to the class I-like SAM-binding methyltransferase superfamily. rRNA adenine N(6)-methyltransferase family. RsmA subfamily.

Its subcellular location is the cytoplasm. The catalysed reaction is adenosine(1518)/adenosine(1519) in 16S rRNA + 4 S-adenosyl-L-methionine = N(6)-dimethyladenosine(1518)/N(6)-dimethyladenosine(1519) in 16S rRNA + 4 S-adenosyl-L-homocysteine + 4 H(+). In terms of biological role, specifically dimethylates two adjacent adenosines (A1518 and A1519) in the loop of a conserved hairpin near the 3'-end of 16S rRNA in the 30S particle. May play a critical role in biogenesis of 30S subunits. The polypeptide is Ribosomal RNA small subunit methyltransferase A (Bacillus anthracis).